Reading from the N-terminus, the 252-residue chain is MSRTPIIAGNWKLHMNPEQTAEFVDAVKDKLPDPSKVESLICAPAVDLDALRKAAKGSNLHIGAENCYFEDEGAYTGETSPKVLKEMGIDYVIIGHSERRGYFHETDEDINKKAKAIFANGLKPIICCGESLETREANKQEDWVVGQIKAALDGLTAEQVSNLVIAYEPIWAIGTGKTASSDQAEEMCKTIRETVKDLYNEETAENVRIQYGGSVKPANVKELMSKPDIDGGLVGGASLKPESYLELVNYQD.

Position 10–12 (10–12) interacts with substrate; the sequence is NWK. Catalysis depends on His96, which acts as the Electrophile. The active-site Proton acceptor is Glu168. Substrate contacts are provided by residues Gly174, Ser214, and 235-236; that span reads GG.

This sequence belongs to the triosephosphate isomerase family. As to quaternary structure, homodimer.

The protein localises to the cytoplasm. It carries out the reaction D-glyceraldehyde 3-phosphate = dihydroxyacetone phosphate. It functions in the pathway carbohydrate biosynthesis; gluconeogenesis. Its pathway is carbohydrate degradation; glycolysis; D-glyceraldehyde 3-phosphate from glycerone phosphate: step 1/1. In terms of biological role, involved in the gluconeogenesis. Catalyzes stereospecifically the conversion of dihydroxyacetone phosphate (DHAP) to D-glyceraldehyde-3-phosphate (G3P). This Lactobacillus helveticus (strain DPC 4571) protein is Triosephosphate isomerase.